The chain runs to 205 residues: Probable peptidyl-tRNA hydrolase 2 (205 aa).

The segment covering Tyr40 to Ser49 has biased composition (polar residues). A disordered region spans residues Tyr40–Glu68. Residues Ser65 and Ser79 each carry the phosphoserine modification.

Belongs to the PTH2 family.

The catalysed reaction is an N-acyl-L-alpha-aminoacyl-tRNA + H2O = an N-acyl-L-amino acid + a tRNA + H(+). In terms of biological role, the natural substrate for this enzyme may be peptidyl-tRNAs which drop off the ribosome during protein synthesis. The sequence is that of Probable peptidyl-tRNA hydrolase 2 from Schizosaccharomyces pombe (strain 972 / ATCC 24843) (Fission yeast).